The sequence spans 249 residues: CDP-diacylglycerol pyrophosphatase (249 aa).

A helical transmembrane segment spans residues 7 to 27 (FLLAVVIVAAVAGIGYWKLAA).

Belongs to the Cdh family.

The protein resides in the cell inner membrane. The catalysed reaction is a CDP-1,2-diacyl-sn-glycerol + H2O = a 1,2-diacyl-sn-glycero-3-phosphate + CMP + 2 H(+). The protein operates within phospholipid metabolism; CDP-diacylglycerol degradation; phosphatidate from CDP-diacylglycerol: step 1/1. In Citrobacter koseri (strain ATCC BAA-895 / CDC 4225-83 / SGSC4696), this protein is CDP-diacylglycerol pyrophosphatase.